Here is an 89-residue protein sequence, read N- to C-terminus: Acyl carrier protein MbtL (89 aa).

The region spanning 8 to 83 (NHVSAELLGI…DLQAAIAAEP (76 aa)) is the Carrier domain. Residue Ser43 is modified to O-(pantetheine 4'-phosphoryl)serine.

Post-translationally, 4'-phosphopantetheine is transferred from CoA to a specific serine of apo-ACP, leading to the activated holo-ACP form.

It is found in the cytoplasm. Its pathway is siderophore biosynthesis; mycobactin biosynthesis. Acyl carrier protein involved in the formation of acyl-S-ACP intermediates within the mycobactin biosynthesis process. The chain is Acyl carrier protein MbtL (mbtL) from Mycolicibacterium paratuberculosis (strain ATCC BAA-968 / K-10) (Mycobacterium paratuberculosis).